Reading from the N-terminus, the 355-residue chain is Protein ECERIFERUM 16 (355 aa).

Disordered regions lie at residues 1-60 and 296-315; these read MDSK…LPSN and HSST…KIHM. Basic residues predominate over residues 7 to 28; sequence AKSKRAHTLHHSKKSHSVHKPK. Polar residues-rich tracts occupy residues 41-53 and 296-310; these read QGNQ…QSRR and HSST…NPSD.

In terms of assembly, interacts with RST1. Expressed in taproots, lateral roots, root tips, leaf veins, cauline leaves, inflorescences, flowers, and siliques.

It is found in the cytoplasm. It localises to the cytosol. The protein localises to the endoplasmic reticulum. In terms of biological role, together with RST1, acts as a cofactor of the cytoplasmic exosome and connects the cytosolic RNA exosome to the SKI complex. Acts as a post-transcriptional gene silencing (PTGS) suppressor. CER16/RIPR can, like RST1 suppress the production of small interfering RNAs (siRNAs) from the CER3 locus, which is involved in cuticule membrane and wax production, and in the typhine and sporopollenin biosynthesis of pollen. The sequence is that of Protein ECERIFERUM 16 from Arabidopsis thaliana (Mouse-ear cress).